A 144-amino-acid chain; its full sequence is Deoxyuridine 5'-triphosphate nucleotidohydrolase (144 aa).

Residues 63–65, Asn76, and 80–82 contribute to the substrate site; these read RSG and TID.

The protein belongs to the dUTPase family. The cofactor is Mg(2+).

It catalyses the reaction dUTP + H2O = dUMP + diphosphate + H(+). Its pathway is pyrimidine metabolism; dUMP biosynthesis; dUMP from dCTP (dUTP route): step 2/2. In terms of biological role, this enzyme is involved in nucleotide metabolism: it produces dUMP, the immediate precursor of thymidine nucleotides and it decreases the intracellular concentration of dUTP so that uracil cannot be incorporated into DNA. This Alkaliphilus metalliredigens (strain QYMF) protein is Deoxyuridine 5'-triphosphate nucleotidohydrolase.